We begin with the raw amino-acid sequence, 243 residues long: Pyridoxine 5'-phosphate synthase (243 aa).

N9 contacts 3-amino-2-oxopropyl phosphate. Residue 11-12 (DH) participates in 1-deoxy-D-xylulose 5-phosphate binding. A 3-amino-2-oxopropyl phosphate-binding site is contributed by R20. The Proton acceptor role is filled by H45. The 1-deoxy-D-xylulose 5-phosphate site is built by R47 and H52. The active-site Proton acceptor is the E72. T102 contributes to the 1-deoxy-D-xylulose 5-phosphate binding site. The Proton donor role is filled by H193. 3-amino-2-oxopropyl phosphate-binding positions include G194 and 215-216 (GH).

This sequence belongs to the PNP synthase family. As to quaternary structure, homooctamer; tetramer of dimers.

It localises to the cytoplasm. It carries out the reaction 3-amino-2-oxopropyl phosphate + 1-deoxy-D-xylulose 5-phosphate = pyridoxine 5'-phosphate + phosphate + 2 H2O + H(+). It functions in the pathway cofactor biosynthesis; pyridoxine 5'-phosphate biosynthesis; pyridoxine 5'-phosphate from D-erythrose 4-phosphate: step 5/5. In terms of biological role, catalyzes the complicated ring closure reaction between the two acyclic compounds 1-deoxy-D-xylulose-5-phosphate (DXP) and 3-amino-2-oxopropyl phosphate (1-amino-acetone-3-phosphate or AAP) to form pyridoxine 5'-phosphate (PNP) and inorganic phosphate. The polypeptide is Pyridoxine 5'-phosphate synthase (Yersinia pestis).